The primary structure comprises 138 residues: von Willebrand factor C domain-containing protein 2-like (138 aa).

A signal peptide spans 1-21 (MALHIHEACILLLVIPGLVTS). The 60-residue stretch at 51–110 (KGCVDDSGFVYKLGERFFPGHSNCPCVCALDGPVCDQPECPKIHPKCTKVEHNGCCPECK) folds into the VWFC domain.

As to quaternary structure, peripherally associated with AMPAR complex. AMPAR complex consists of an inner core made of 4 pore-forming GluA/GRIA proteins (GRIA1, GRIA2, GRIA3 and GRIA4) and 4 major auxiliary subunits arranged in a twofold symmetry. One of the two pairs of distinct binding sites is occupied either by CNIH2, CNIH3 or CACNG2, CACNG3. The other harbors CACNG2, CACNG3, CACNG4, CACNG8 or GSG1L. This inner core of AMPAR complex is complemented by outer core constituents binding directly to the GluA/GRIA proteins at sites distinct from the interaction sites of the inner core constituents. Outer core constituents include at least PRRT1, PRRT2, CKAMP44/SHISA9, FRRS1L and NRN1. The proteins of the inner and outer core serve as a platform for other, more peripherally associated AMPAR constituents, including VWC2L. Alone or in combination, these auxiliary subunits control the gating and pharmacology of the AMPAR complex and profoundly impact their biogenesis and protein processing.

The protein localises to the secreted. It localises to the synapse. May play a role in neurogenesis. May play a role in bone differentiation and matrix mineralization. The sequence is that of von Willebrand factor C domain-containing protein 2-like (VWC2L) from Macaca fascicularis (Crab-eating macaque).